The following is a 106-amino-acid chain: Antitoxin MazE3 (106 aa).

As to quaternary structure, forms a complex with cognate toxin MazF3, possibly with 1:1 stoichiometry.

Antitoxin component of a type II toxin-antitoxin (TA) system. Upon expression in E.coli and M.smegmatis neutralizes the effect of cognate toxin MazF3. Overexpression of MazE3 alone decreased persister cells formation in M.smegmatis upon challenge with gentamicin or kanamycin. The sequence is that of Antitoxin MazE3 (mazE3) from Mycobacterium tuberculosis (strain ATCC 25618 / H37Rv).